A 199-amino-acid polypeptide reads, in one-letter code: MQPIELAELLTSQAAVLTSLVVIGLILCFIGYKIFRVYSAVIGLFIGQLVGIYITINYYENALIVILASAIVGALLFALIDELGLIVTGAAFGYFVGVYLLPEYQVYAFVLAALFALINLFIEKPLTVLITSVIGASAIALAVHMGITGTHIYDILNDPKKVFDAIFSNAYFDLLWFTLVLTGIITQYVTYKEEREEEE.

Transmembrane regions (helical) follow at residues 10 to 32 (LTSQ…FIGY), 37 to 59 (VYSA…INYY), 63 to 80 (LIVI…FALI), 83 to 100 (LGLI…GVYL), 104 to 121 (YQVY…INLF), 126 to 148 (LTVL…MGIT), and 163 to 185 (FDAI…TGII).

Its subcellular location is the cell membrane. This is an uncharacterized protein from Archaeoglobus fulgidus (strain ATCC 49558 / DSM 4304 / JCM 9628 / NBRC 100126 / VC-16).